Reading from the N-terminus, the 147-residue chain is UPF0735 ACT domain-containing protein BPUM_2431 (147 aa).

In terms of domain architecture, ACT spans 70-145 (TLFFHLEDRS…FVEKVEILGS (76 aa)).

The protein belongs to the UPF0735 family.

This is UPF0735 ACT domain-containing protein BPUM_2431 from Bacillus pumilus (strain SAFR-032).